Consider the following 31-residue polypeptide: MVSEAITALKERTGSMLTQIKKLVAAGKLTK.

The protein belongs to the histone H1/H5 family.

It is found in the nucleus. The protein localises to the chromosome. Functionally, histones H1 are necessary for the condensation of nucleosome chains into higher-order structures. This is Histone H1.3 from Triticum aestivum (Wheat).